The sequence spans 106 residues: Thioredoxin-2 (106 aa).

The Thioredoxin domain occupies 1–106 (MVYQVKDKAD…RLEDVIKANI (106 aa)). Residues cysteine 32 and cysteine 35 each act as nucleophile in the active site. A disulfide bridge connects residues cysteine 32 and cysteine 35.

The protein belongs to the thioredoxin family. As to quaternary structure, monomer.

Functionally, participates in various redox reactions through the reversible oxidation of its active center dithiol to a disulfide and catalyzes dithiol-disulfide exchange reactions. As a reducing substrate of peroxiredoxin 1, thioredoxin 2 is preferred over thioredoxin 1. This chain is Thioredoxin-2, found in Drosophila melanogaster (Fruit fly).